The primary structure comprises 187 residues: Large ribosomal subunit protein uL5 (187 aa).

Belongs to the universal ribosomal protein uL5 family. In terms of assembly, part of the 50S ribosomal subunit; part of the 5S rRNA/L5/L18/L25 subcomplex. Contacts the 5S rRNA and the P site tRNA. Forms a bridge to the 30S subunit in the 70S ribosome.

In terms of biological role, this is one of the proteins that bind and probably mediate the attachment of the 5S RNA into the large ribosomal subunit, where it forms part of the central protuberance. In the 70S ribosome it contacts protein S13 of the 30S subunit (bridge B1b), connecting the 2 subunits; this bridge is implicated in subunit movement. Contacts the P site tRNA; the 5S rRNA and some of its associated proteins might help stabilize positioning of ribosome-bound tRNAs. This Mycobacterium bovis (strain ATCC BAA-935 / AF2122/97) protein is Large ribosomal subunit protein uL5.